Consider the following 99-residue polypeptide: Integration host factor subunit beta (99 aa).

Belongs to the bacterial histone-like protein family. In terms of assembly, heterodimer of an alpha and a beta chain.

In terms of biological role, this protein is one of the two subunits of integration host factor, a specific DNA-binding protein that functions in genetic recombination as well as in transcriptional and translational control. In Rhizobium etli (strain CIAT 652), this protein is Integration host factor subunit beta.